The chain runs to 336 residues: Dihydroorotate dehydrogenase (quinone) (336 aa).

FMN-binding positions include 62 to 66 (AGLEK) and Thr-86. Lys-66 contributes to the substrate binding site. 111–115 (NRMGF) is a binding site for substrate. FMN is bound by residues Asn-139 and Asn-172. Asn-172 is a binding site for substrate. Ser-175 serves as the catalytic Nucleophile. Asn-177 provides a ligand contact to substrate. The FMN site is built by Lys-217 and Thr-245. 246-247 (NT) contacts substrate. FMN is bound by residues Gly-268, Gly-297, and 318–319 (YS).

The protein belongs to the dihydroorotate dehydrogenase family. Type 2 subfamily. In terms of assembly, monomer. Requires FMN as cofactor.

The protein resides in the cell membrane. The enzyme catalyses (S)-dihydroorotate + a quinone = orotate + a quinol. The protein operates within pyrimidine metabolism; UMP biosynthesis via de novo pathway; orotate from (S)-dihydroorotate (quinone route): step 1/1. Functionally, catalyzes the conversion of dihydroorotate to orotate with quinone as electron acceptor. In Aliivibrio salmonicida (strain LFI1238) (Vibrio salmonicida (strain LFI1238)), this protein is Dihydroorotate dehydrogenase (quinone).